Here is a 318-residue protein sequence, read N- to C-terminus: N-acetyl-gamma-glutamyl-phosphate reductase (318 aa).

Cys132 is a catalytic residue.

This sequence belongs to the NAGSA dehydrogenase family. Type 1 subfamily.

The protein resides in the cytoplasm. The catalysed reaction is N-acetyl-L-glutamate 5-semialdehyde + phosphate + NADP(+) = N-acetyl-L-glutamyl 5-phosphate + NADPH + H(+). Its pathway is amino-acid biosynthesis; L-arginine biosynthesis; N(2)-acetyl-L-ornithine from L-glutamate: step 3/4. Functionally, catalyzes the NADPH-dependent reduction of N-acetyl-5-glutamyl phosphate to yield N-acetyl-L-glutamate 5-semialdehyde. The protein is N-acetyl-gamma-glutamyl-phosphate reductase of Azobacteroides pseudotrichonymphae genomovar. CFP2.